Consider the following 187-residue polypeptide: UPF0301 protein YqgE (187 aa).

It belongs to the UPF0301 (AlgH) family.

In Shigella boydii serotype 4 (strain Sb227), this protein is UPF0301 protein YqgE.